The sequence spans 171 residues: Ribosome maturation factor RimM (171 aa).

In terms of domain architecture, PRC barrel spans 96 to 170 (AEGEYYYHEI…LVTIHVMEGL (75 aa)).

Belongs to the RimM family. As to quaternary structure, binds ribosomal protein uS19.

It is found in the cytoplasm. Its function is as follows. An accessory protein needed during the final step in the assembly of 30S ribosomal subunit, possibly for assembly of the head region. Essential for efficient processing of 16S rRNA. May be needed both before and after RbfA during the maturation of 16S rRNA. It has affinity for free ribosomal 30S subunits but not for 70S ribosomes. This is Ribosome maturation factor RimM from Bacillus cereus (strain G9842).